The primary structure comprises 398 residues: Lysophosphatidylserine lipase ABHD12 (398 aa).

The span at 1-15 (MRKRTEPVTLEHERC) shows a compositional bias: basic and acidic residues. The interval 1–24 (MRKRTEPVTLEHERCAASGSSSSG) is disordered. The Cytoplasmic portion of the chain corresponds to 1-74 (MRKRTEPVTL…RKSLWFRLRK (74 aa)). The helical transmembrane segment at 75–95 (ILLCVLGFYIAIPFLVKLCPG) threads the bilayer. The Extracellular segment spans residues 96–398 (IQAKLIFLNF…LGKSEPERQH (303 aa)). Asparagine 123 is a glycosylation site (N-linked (GlcNAc...) asparagine). The active-site Nucleophile is the serine 246. Catalysis depends on charge relay system residues aspartate 333 and histidine 372.

This sequence belongs to the serine esterase family. Glycosylated.

Its subcellular location is the endoplasmic reticulum membrane. It localises to the mitochondrion. It catalyses the reaction 1-(9Z-octadecenoyl)-sn-glycero-3-phospho-L-serine + H2O = sn-glycero-3-phospho-L-serine + (9Z)-octadecenoate + H(+). It carries out the reaction 1-(9Z-octadecenoyl)-sn-glycero-3-phospho-(1'-sn-glycerol) + H2O = sn-glycero-3-phospho-(1'-sn-glycerol) + (9Z)-octadecenoate + H(+). The enzyme catalyses 1-(9Z-octadecenoyl)-sn-glycero-3-phospho-(1D-myo-inositol) + H2O = sn-glycero-3-phospho-1D-myo-inositol + (9Z)-octadecenoate + H(+). The catalysed reaction is 1-(9Z-octadecenoyl)-sn-glycero-3-phosphoethanolamine + H2O = sn-glycero-3-phosphoethanolamine + (9Z)-octadecenoate + H(+). It catalyses the reaction 1-(9Z-octadecenoyl)-sn-glycero-3-phosphocholine + H2O = 1-(9Z-octadecenoyl)-sn-glycerol + phosphocholine + H(+). It carries out the reaction 2-(9Z-octadecenoyl)-glycerol + H2O = glycerol + (9Z)-octadecenoate + H(+). The enzyme catalyses 1-hexadecanoyl-sn-glycero-3-phospho-L-serine + H2O = sn-glycero-3-phospho-L-serine + hexadecanoate + H(+). The catalysed reaction is 2-(5Z,8Z,11Z,14Z-eicosatetraenoyl)-glycerol + H2O = glycerol + (5Z,8Z,11Z,14Z)-eicosatetraenoate + H(+). It catalyses the reaction Hydrolyzes glycerol monoesters of long-chain fatty acids.. It carries out the reaction 1-decanoylglycerol + H2O = decanoate + glycerol + H(+). The enzyme catalyses 1-dodecanoylglycerol + H2O = dodecanoate + glycerol + H(+). The catalysed reaction is 1-tetradecanoylglycerol + H2O = tetradecanoate + glycerol + H(+). It catalyses the reaction 2-hexadecanoylglycerol + H2O = glycerol + hexadecanoate + H(+). It carries out the reaction 1-(9Z-octadecenoyl)-glycerol + H2O = glycerol + (9Z)-octadecenoate + H(+). The enzyme catalyses 2-(9Z,12Z-octadecadienoyl)-glycerol + H2O = (9Z,12Z)-octadecadienoate + glycerol + H(+). The catalysed reaction is 1-(5Z,8Z,11Z,14Z-eicosatetraenoyl)-glycerol + H2O = glycerol + (5Z,8Z,11Z,14Z)-eicosatetraenoate + H(+). It catalyses the reaction 1-(9Z,12Z-octadecadienoyl)-glycerol + H2O = (9Z,12Z)-octadecadienoate + glycerol + H(+). It carries out the reaction 1-hexadecanoylglycerol + H2O = glycerol + hexadecanoate + H(+). The enzyme catalyses 1-octadecanoylglycerol + H2O = octadecanoate + glycerol + H(+). The catalysed reaction is 1-octadecanoyl-2-(9,10-epoxyoctadecanoyl)-sn-glycero-3-phospho-L-serine + H2O = 9,10-epoxyoctadecanoate + 1-octadecanoyl-sn-glycero-3-phosphoserine + H(+). It catalyses the reaction 1-octadecanoyl-2-(10-hydroxyoctadecanoyl)-sn-glycero-3-phospho-L-serine + H2O = 1-octadecanoyl-sn-glycero-3-phosphoserine + 10-hydroxyoctadecanoate + H(+). It carries out the reaction 1-hexadecanoyl-2-(10-hydroxyoctadecanoyl)-sn-glycero-3-phospho-L-serine + H2O = 10-hydroxyoctadecanoate + 1-hexadecanoyl-sn-glycero-3-phospho-L-serine + H(+). With respect to regulation, selectively inhibited by DO264 (N-3-pyridyl-N'-(1-[3-chloro-4-{2-chloro-4-(trifluoromethoxy)phenoxy}pyridine-2-yl]piperidin-4-yl)thiourea). Lysophosphatidylserine (LPS) lipase that mediates the hydrolysis of lysophosphatidylserine, a class of signaling lipids that regulates immunological and neurological processes. Represents a major lysophosphatidylserine lipase in the brain, thereby playing a key role in the central nervous system. Also able to hydrolyze oxidized phosphatidylserine; oxidized phosphatidylserine is produced in response to severe inflammatory stress and constitutes a proapoptotic 'eat me' signal. Also has monoacylglycerol (MAG) lipase activity: hydrolyzes 2-arachidonoylglycerol (2-AG), thereby acting as a regulator of endocannabinoid signaling pathways. Has a strong preference for very-long-chain lipid substrates; substrate specificity is likely due to improved catalysis and not improved substrate binding. This Mus musculus (Mouse) protein is Lysophosphatidylserine lipase ABHD12.